A 222-amino-acid chain; its full sequence is uncharacterized protein (222 aa).

A disordered region spans residues 142-222 (ARRGGCVHPP…LPDPPSAGHL (81 aa)). A compositionally biased stretch (low complexity) spans 160 to 169 (QSRSISSRRA). Basic residues predominate over residues 182–196 (PRRRPHRHRTRPQTR).

The protein belongs to the Rv1128c/1148c/1588c/1702c/1945/3466 family.

This is an uncharacterized protein from Mycobacterium tuberculosis (strain CDC 1551 / Oshkosh).